Here is a 166-residue protein sequence, read N- to C-terminus: Large ribosomal subunit protein uL10 (166 aa).

This sequence belongs to the universal ribosomal protein uL10 family. In terms of assembly, part of the ribosomal stalk of the 50S ribosomal subunit. The N-terminus interacts with L11 and the large rRNA to form the base of the stalk. The C-terminus forms an elongated spine to which L12 dimers bind in a sequential fashion forming a multimeric L10(L12)X complex.

Forms part of the ribosomal stalk, playing a central role in the interaction of the ribosome with GTP-bound translation factors. The sequence is that of Large ribosomal subunit protein uL10 from Aeromonas hydrophila subsp. hydrophila (strain ATCC 7966 / DSM 30187 / BCRC 13018 / CCUG 14551 / JCM 1027 / KCTC 2358 / NCIMB 9240 / NCTC 8049).